The following is a 67-amino-acid chain: Conotoxin Pu5.1 (67 aa).

Positions 1 to 22 (MRCVPVFVILLLLIASTPSVDA) are cleaved as a signal peptide. Positions 23–51 (RPNPKDDVPLASFHEDANGILQMLWKKGR) are excised as a propeptide. Trp63 is subject to Tryptophan amide.

The protein belongs to the conotoxin T superfamily. In terms of processing, contains 2 disulfide bonds that can be either 'C1-C3, C2-C4' or 'C1-C4, C2-C3', since these disulfide connectivities have been observed for conotoxins with cysteine framework V (for examples, see AC P0DQQ7 and AC P81755). As to expression, expressed by the venom duct.

The protein localises to the secreted. This chain is Conotoxin Pu5.1, found in Conus pulicarius (Flea-bitten cone).